Here is a 22-residue protein sequence, read N- to C-terminus: uncharacterized protein (22 aa).

It belongs to the asfivirus C84L family.

This is an uncharacterized protein from Ornithodoros (relapsing fever ticks).